A 387-amino-acid chain; its full sequence is Lipid-A-disaccharide synthase (387 aa).

It belongs to the LpxB family.

It catalyses the reaction 2-N,3-O-bis[(3R)-3-hydroxytetradecanoyl]-alpha-D-glucosaminyl 1-phosphate + UDP-2-N,3-O-bis[(3R)-3-hydroxytetradecanoyl]-alpha-D-glucosamine = lipid A disaccharide (E. coli) + UDP + H(+). The enzyme catalyses a lipid X + a UDP-2-N,3-O-bis[(3R)-3-hydroxyacyl]-alpha-D-glucosamine = a lipid A disaccharide + UDP + H(+). The protein operates within glycolipid biosynthesis; lipid IV(A) biosynthesis; lipid IV(A) from (3R)-3-hydroxytetradecanoyl-[acyl-carrier-protein] and UDP-N-acetyl-alpha-D-glucosamine: step 5/6. Functionally, condensation of UDP-2,3-diacylglucosamine and 2,3-diacylglucosamine-1-phosphate to form lipid A disaccharide, a precursor of lipid A, a phosphorylated glycolipid that anchors the lipopolysaccharide to the outer membrane of the cell. This Blochmanniella pennsylvanica (strain BPEN) protein is Lipid-A-disaccharide synthase.